A 487-amino-acid chain; its full sequence is Glutamate--tRNA ligase (487 aa).

Residues 11–21 (PSPTGYPHLGN) carry the 'HIGH' region motif. Residues Cys108, Cys110, Cys135, and Asp137 each coordinate Zn(2+). The 'KMSKS' region motif lies at 245–249 (KLSKR). Lys248 contacts ATP.

It belongs to the class-I aminoacyl-tRNA synthetase family. Glutamate--tRNA ligase type 1 subfamily. Monomer. It depends on Zn(2+) as a cofactor.

Its subcellular location is the cytoplasm. It catalyses the reaction tRNA(Glu) + L-glutamate + ATP = L-glutamyl-tRNA(Glu) + AMP + diphosphate. Functionally, catalyzes the attachment of glutamate to tRNA(Glu) in a two-step reaction: glutamate is first activated by ATP to form Glu-AMP and then transferred to the acceptor end of tRNA(Glu). This chain is Glutamate--tRNA ligase, found in Dehalococcoides mccartyi (strain CBDB1).